Consider the following 429-residue polypeptide: Histidine--tRNA ligase (429 aa).

Belongs to the class-II aminoacyl-tRNA synthetase family. Homodimer.

It is found in the cytoplasm. The enzyme catalyses tRNA(His) + L-histidine + ATP = L-histidyl-tRNA(His) + AMP + diphosphate + H(+). This Dechloromonas aromatica (strain RCB) protein is Histidine--tRNA ligase.